The primary structure comprises 357 residues: Isopentenyl-diphosphate delta-isomerase (357 aa).

12–13 (RK) contacts substrate. Residues S70, 71-73 (SMT), S101, and N130 contribute to the FMN site. Residue 101–103 (SMR) coordinates substrate. Q165 contacts substrate. A Mg(2+)-binding site is contributed by E166. Residues K197 and 310–311 (AR) contribute to the FMN site.

Belongs to the IPP isomerase type 2 family. In terms of assembly, homooctamer. Dimer of tetramers. FMN serves as cofactor. It depends on NADPH as a cofactor. The cofactor is Mg(2+).

It is found in the cytoplasm. The catalysed reaction is isopentenyl diphosphate = dimethylallyl diphosphate. Its function is as follows. Involved in the biosynthesis of isoprenoids. Catalyzes the 1,3-allylic rearrangement of the homoallylic substrate isopentenyl (IPP) to its allylic isomer, dimethylallyl diphosphate (DMAPP). The protein is Isopentenyl-diphosphate delta-isomerase of Pelodictyon phaeoclathratiforme (strain DSM 5477 / BU-1).